Consider the following 841-residue polypeptide: Potassium transport protein 1 (841 aa).

The next 2 helical transmembrane spans lie at 24–44 (YIYIISLTIIASILLFTGGTT) and 80–100 (ILYGFTAITVPIWMHGSISFI). Asn-116 and Asn-164 each carry an N-linked (GlcNAc...) asparagine glycan. Residues 173 to 192 (STNNPYFPDNPPSPKADISK) are disordered. Asn-215 and Asn-401 each carry an N-linked (GlcNAc...) asparagine glycan. 7 consecutive transmembrane segments (helical) span residues 469–489 (MVTLYFIIFNIAAFVTFIVFA), 507–527 (GWWALFSSASSFNDLGFSLIP), 537–557 (IFLLLISSLFIIAGNTGFPCF), 600–620 (WVLFFVLLLLNVIDLVLFMVL), 662–682 (AVLVSYMVMMYISVYPVAINM), 715–735 (LSYDLWYIFLGLFIICICEGG), and 747–767 (IFTVLFEVVSAYGTVGLSTGL). The N-linked (GlcNAc...) asparagine glycan is linked to Asn-771.

The protein belongs to the TrkH potassium transport family.

The protein resides in the cell membrane. Functionally, together with TRK2, defines the major, high-affinity potassium influx transport system. Involved in maintenance of the proper sodium/potassium ratio in the cell and in regulating the plasma membrane potential. This is Potassium transport protein 1 (trk1) from Schizosaccharomyces pombe (strain 972 / ATCC 24843) (Fission yeast).